Here is a 279-residue protein sequence, read N- to C-terminus: Pantothenate synthetase (279 aa).

Residue methionine 26 to histidine 33 participates in ATP binding. Histidine 33 (proton donor) is an active-site residue. Glutamine 57 is a binding site for (R)-pantoate. Glutamine 57 contributes to the beta-alanine binding site. Residue glycine 144–aspartate 147 coordinates ATP. Glutamine 150 is a binding site for (R)-pantoate. Residues valine 173 and leucine 181–arginine 184 each bind ATP.

The protein belongs to the pantothenate synthetase family. In terms of assembly, homodimer.

Its subcellular location is the cytoplasm. The catalysed reaction is (R)-pantoate + beta-alanine + ATP = (R)-pantothenate + AMP + diphosphate + H(+). It functions in the pathway cofactor biosynthesis; (R)-pantothenate biosynthesis; (R)-pantothenate from (R)-pantoate and beta-alanine: step 1/1. Functionally, catalyzes the condensation of pantoate with beta-alanine in an ATP-dependent reaction via a pantoyl-adenylate intermediate. The sequence is that of Pantothenate synthetase from Burkholderia lata (strain ATCC 17760 / DSM 23089 / LMG 22485 / NCIMB 9086 / R18194 / 383).